The primary structure comprises 459 residues: NADH-ubiquinone oxidoreductase chain 4 (459 aa).

12 helical membrane-spanning segments follow: residues 20 to 42 (PKWL…LTLF), 61 to 81 (MIST…IIAS), 103 to 123 (LQAL…YIMF), 148 to 168 (IYFL…LLYL), 194 to 214 (FLWV…GVHL), 224 to 244 (PVAG…YGMI), 257 to 277 (LAYP…SICM), 284 to 303 (SLIA…GILI), 307 to 329 (WGFT…LFCL), 350 to 370 (IILP…MALP), 392 to 414 (TILL…YMSS), and 435 to 455 (LLLT…ELIW).

This sequence belongs to the complex I subunit 4 family.

The protein resides in the mitochondrion membrane. It catalyses the reaction a ubiquinone + NADH + 5 H(+)(in) = a ubiquinol + NAD(+) + 4 H(+)(out). Its function is as follows. Core subunit of the mitochondrial membrane respiratory chain NADH dehydrogenase (Complex I) that is believed to belong to the minimal assembly required for catalysis. Complex I functions in the transfer of electrons from NADH to the respiratory chain. The immediate electron acceptor for the enzyme is believed to be ubiquinone. The sequence is that of NADH-ubiquinone oxidoreductase chain 4 (MT-ND4) from Polypterus ornatipinnis (Ornate bichir).